The primary structure comprises 126 residues: Aspartate 1-decarboxylase (126 aa).

Ser-25 functions as the Schiff-base intermediate with substrate; via pyruvic acid in the catalytic mechanism. Ser-25 carries the post-translational modification Pyruvic acid (Ser). Thr-57 contacts substrate. The active-site Proton donor is Tyr-58. 73–75 contributes to the substrate binding site; sequence GAA.

This sequence belongs to the PanD family. As to quaternary structure, heterooctamer of four alpha and four beta subunits. It depends on pyruvate as a cofactor. Is synthesized initially as an inactive proenzyme, which is activated by self-cleavage at a specific serine bond to produce a beta-subunit with a hydroxyl group at its C-terminus and an alpha-subunit with a pyruvoyl group at its N-terminus.

It localises to the cytoplasm. It catalyses the reaction L-aspartate + H(+) = beta-alanine + CO2. It participates in cofactor biosynthesis; (R)-pantothenate biosynthesis; beta-alanine from L-aspartate: step 1/1. Its function is as follows. Catalyzes the pyruvoyl-dependent decarboxylation of aspartate to produce beta-alanine. The chain is Aspartate 1-decarboxylase from Yersinia pestis bv. Antiqua (strain Antiqua).